A 322-amino-acid polypeptide reads, in one-letter code: Tetraacyldisaccharide 4'-kinase (322 aa).

40–47 (CVGGTGKT) lines the ATP pocket.

This sequence belongs to the LpxK family.

It catalyses the reaction a lipid A disaccharide + ATP = a lipid IVA + ADP + H(+). The protein operates within glycolipid biosynthesis; lipid IV(A) biosynthesis; lipid IV(A) from (3R)-3-hydroxytetradecanoyl-[acyl-carrier-protein] and UDP-N-acetyl-alpha-D-glucosamine: step 6/6. Its function is as follows. Transfers the gamma-phosphate of ATP to the 4'-position of a tetraacyldisaccharide 1-phosphate intermediate (termed DS-1-P) to form tetraacyldisaccharide 1,4'-bis-phosphate (lipid IVA). The polypeptide is Tetraacyldisaccharide 4'-kinase (Koribacter versatilis (strain Ellin345)).